An 878-amino-acid polypeptide reads, in one-letter code: Alanine--tRNA ligase (878 aa).

Residues histidine 567, histidine 571, cysteine 669, and histidine 673 each contribute to the Zn(2+) site.

This sequence belongs to the class-II aminoacyl-tRNA synthetase family. The cofactor is Zn(2+).

Its subcellular location is the cytoplasm. It carries out the reaction tRNA(Ala) + L-alanine + ATP = L-alanyl-tRNA(Ala) + AMP + diphosphate. In terms of biological role, catalyzes the attachment of alanine to tRNA(Ala) in a two-step reaction: alanine is first activated by ATP to form Ala-AMP and then transferred to the acceptor end of tRNA(Ala). Also edits incorrectly charged Ser-tRNA(Ala) and Gly-tRNA(Ala) via its editing domain. This chain is Alanine--tRNA ligase, found in Rickettsia conorii (strain ATCC VR-613 / Malish 7).